The primary structure comprises 386 residues: 2-deoxy-scyllo-inosose synthase (386 aa).

NAD(+) contacts are provided by residues D42, 73 to 76 (EVHK), 105 to 109 (GITGN), 129 to 130 (TT), 140 to 142 (SLK), and 151 to 152 (KN). The active site involves K142. Residue E184 coordinates Co(2+). E244 is a catalytic residue. 2 residues coordinate Co(2+): H247 and H263.

This sequence belongs to the sugar phosphate cyclases superfamily. DOI synthase family. NAD(+) serves as cofactor. Co(2+) is required as a cofactor.

The enzyme catalyses D-glucose 6-phosphate = 2-deoxy-L-scyllo-inosose + phosphate. The protein operates within metabolic intermediate biosynthesis; 2-deoxystreptamine biosynthesis; 2-deoxystreptamine from D-glucose 6-phosphate: step 1/4. Its pathway is antibiotic biosynthesis; paromomycin biosynthesis. Its function is as follows. Catalyzes the intramolecular carbocycle formation from D-glucose-6-phosphate to 2-deoxy-scyllo-inosose (DOI). The chain is 2-deoxy-scyllo-inosose synthase (parC) from Streptomyces paromomycinus (Streptomyces rimosus subsp. paromomycinus).